The sequence spans 49 residues: Large ribosomal subunit protein bL33A (49 aa).

This sequence belongs to the bacterial ribosomal protein bL33 family.

The chain is Large ribosomal subunit protein bL33A from Limosilactobacillus reuteri subsp. reuteri (strain JCM 1112) (Lactobacillus reuteri).